A 203-amino-acid polypeptide reads, in one-letter code: ATP-dependent Clp protease proteolytic subunit (203 aa).

The Nucleophile role is filled by S107. H132 is an active-site residue.

The protein belongs to the peptidase S14 family. As to quaternary structure, fourteen ClpP subunits assemble into 2 heptameric rings which stack back to back to give a disk-like structure with a central cavity, resembling the structure of eukaryotic proteasomes.

It is found in the cytoplasm. The enzyme catalyses Hydrolysis of proteins to small peptides in the presence of ATP and magnesium. alpha-casein is the usual test substrate. In the absence of ATP, only oligopeptides shorter than five residues are hydrolyzed (such as succinyl-Leu-Tyr-|-NHMec, and Leu-Tyr-Leu-|-Tyr-Trp, in which cleavage of the -Tyr-|-Leu- and -Tyr-|-Trp bonds also occurs).. In terms of biological role, cleaves peptides in various proteins in a process that requires ATP hydrolysis. Has a chymotrypsin-like activity. Plays a major role in the degradation of misfolded proteins. In Shewanella pealeana (strain ATCC 700345 / ANG-SQ1), this protein is ATP-dependent Clp protease proteolytic subunit.